The sequence spans 119 residues: Large ribosomal subunit protein bL20c (119 aa).

Belongs to the bacterial ribosomal protein bL20 family.

It localises to the plastid. It is found in the chloroplast. Its function is as follows. Binds directly to 23S ribosomal RNA and is necessary for the in vitro assembly process of the 50S ribosomal subunit. It is not involved in the protein synthesizing functions of that subunit. The sequence is that of Large ribosomal subunit protein bL20c from Brachypodium distachyon (Purple false brome).